A 70-amino-acid chain; its full sequence is NAD(P)H-quinone oxidoreductase subunit L (70 aa).

2 consecutive transmembrane segments (helical) span residues 2-22 and 39-59; these read IVALLYLILAGAYLLVIPIAV and LLMYFLVFFFFPGLLVLSPFA.

This sequence belongs to the complex I NdhL subunit family. NDH-1 can be composed of about 15 different subunits; different subcomplexes with different compositions have been identified which probably have different functions.

Its subcellular location is the cellular thylakoid membrane. The catalysed reaction is a plastoquinone + NADH + (n+1) H(+)(in) = a plastoquinol + NAD(+) + n H(+)(out). It catalyses the reaction a plastoquinone + NADPH + (n+1) H(+)(in) = a plastoquinol + NADP(+) + n H(+)(out). In terms of biological role, NDH-1 shuttles electrons from an unknown electron donor, via FMN and iron-sulfur (Fe-S) centers, to quinones in the respiratory and/or the photosynthetic chain. The immediate electron acceptor for the enzyme in this species is believed to be plastoquinone. Couples the redox reaction to proton translocation, and thus conserves the redox energy in a proton gradient. Cyanobacterial NDH-1 also plays a role in inorganic carbon-concentration. The sequence is that of NAD(P)H-quinone oxidoreductase subunit L from Nostoc punctiforme (strain ATCC 29133 / PCC 73102).